Reading from the N-terminus, the 508-residue chain is Vacuolar serine-type carboxypeptidase ATG42 (508 aa).

Positions 1–24 (MKYLNLVFVLQLLISIKYASFGRA) are cleaved as a signal peptide. 5 cysteine pairs are disulfide-bonded: Cys132/Cys375, Cys267/Cys281, Cys291/Cys314, Cys298/Cys307, and Cys336/Cys345. Asn163 carries N-linked (GlcNAc...) asparagine glycosylation. The active site involves Ser219. A glycan (N-linked (GlcNAc...) asparagine) is linked at Asn242. Asn339 and Asn371 each carry an N-linked (GlcNAc...) asparagine glycan. Asp415 is a catalytic residue. Cys418 is a substrate binding site. His474 is an active-site residue. Met475 is a binding site for substrate.

The protein belongs to the peptidase S10 family.

The protein resides in the vacuole lumen. The catalysed reaction is Release of a C-terminal amino acid with broad specificity.. Functionally, vacuolar serine-type carboxypeptidase involved in vacuolar zymogen activation, breakdown of the autophagic body, and autophagosome-dependent protein synthesis. Plays a key role in phytochelatin (PC) synthesis from glutathione (GSH) by cleaving the Gly from GSH and form the PC-peptides of the structure (gamma-Glu-Cys)2-Gly. Also involved in resistance to xenobiotics via the degradation of glutathione-S-conjugates. This chain is Vacuolar serine-type carboxypeptidase ATG42, found in Saccharomyces cerevisiae (strain ATCC 204508 / S288c) (Baker's yeast).